The sequence spans 424 residues: MFS-type transporter opdF (424 aa).

The span at 1–10 (MSDTSLEKGN) shows a compositional bias: basic and acidic residues. A disordered region spans residues 1–23 (MSDTSLEKGNEGPTAEAPKVAPP). 5 helical membrane-spanning segments follow: residues 36–56 (VAGA…IALF), 102–122 (VPIA…SLST), 127–147 (LMLS…TPAM), 160–180 (IVGG…PLMV), and 187–207 (VGFG…LVFA). The N-linked (GlcNAc...) asparagine glycan is linked to N208. Helical transmembrane passes span 239 to 259 (LCVA…YIVV), 265 to 285 (GMST…SFFG), 299 to 319 (FNVM…LWLP), 329 to 349 (FAAL…VLIV), 364 to 384 (VLAF…AIAA), and 391 to 411 (TYTC…LAAL).

The protein belongs to the major facilitator superfamily. Monocarboxylate porter (TC 2.A.1.13) family.

It localises to the membrane. Its function is as follows. MFS-type transporter; part of the gene cluster that mediates the biosynthesis of oxopyrrolidines, polyketide-amino acid hybrid compounds with feature structures of tetramic acid. The protein is MFS-type transporter opdF of Penicillium oxalicum (strain 114-2 / CGMCC 5302) (Penicillium decumbens).